A 338-amino-acid chain; its full sequence is Anthocyanidin reductase ((2S)-flavan-3-ol-forming) (338 aa).

Residues 18–21 (TGFV), K48, 87–90 (VATP), and Y168 contribute to the NADP(+) site.

The protein belongs to the NAD(P)-dependent epimerase/dehydratase family. Dihydroflavonol-4-reductase subfamily. In terms of tissue distribution, expressed in seeds, grape skins, flowers and leaves.

The enzyme catalyses a (2S,3R)-flavan-3-ol + 2 NADP(+) = an anthocyanidin with a 3-hydroxy group + 2 NADPH + 2 H(+). It carries out the reaction a (2S,3S)-flavan-3-ol + 2 NADP(+) = an anthocyanidin with a 3-hydroxy group + 2 NADPH + 2 H(+). The protein operates within secondary metabolite biosynthesis; flavonoid biosynthesis. Inhibited at NaCl concentrations higher than 200 mM. Functionally, produces the terminal flavan-3-ol monomers required for the formation of proanthocyanidins or condensed tannins in leaves and flowers, as well as in the skin and seeds of developing berries. Behaves as a reductase and as a C-3 epimerase. Catalyzes the double reduction of anthocyanidins, producing a mixture of (2S,3S)- and (2S,3R)-flavan-3-ols. The enzyme catalyzes sequential hydride transfers to C-2 and C-4, respectively and epimerization at C-3 is achieved by tautomerization that occurs between the two hydride transfers. Converts cyanidin, pelargonidin and delphinidin into catechin and epicatechin, afzelechin and epiafzelechin, and gallocatechin and epigallocatechin respectively. The protein is Anthocyanidin reductase ((2S)-flavan-3-ol-forming) of Vitis vinifera (Grape).